The chain runs to 43 residues: Protein PsbN (43 aa).

The chain crosses the membrane as a helical span at residues 5-27; sequence TLVAISISGLLVSFTGYALYTAF.

Belongs to the PsbN family.

The protein localises to the plastid. It localises to the chloroplast thylakoid membrane. May play a role in photosystem I and II biogenesis. This is Protein PsbN from Coelogyne cristata (Orchid).